A 622-amino-acid chain; its full sequence is Polypeptide N-acetylgalactosaminyltransferase 6 (622 aa).

Topologically, residues 1–8 are cytoplasmic; sequence MRLLRRRH. The helical; Signal-anchor for type II membrane protein transmembrane segment at 9–28 threads the bilayer; the sequence is MAVRLVMVGSAFVLFLFILQ. Residues 29 to 622 are Lumenal-facing; the sequence is RDVSGREQAT…SDPHQHWLFI (594 aa). N-linked (GlcNAc...) asparagine glycosylation occurs at asparagine 86. A disordered region spans residues 103–135; that stretch reads WERPPQDPNGPGADGKAFQKKEWTPQETQEKEE. Residues 119-135 are compositionally biased toward basic and acidic residues; it reads AFQKKEWTPQETQEKEE. A catalytic subdomain A region spans residues 176–285; the sequence is LPATSVIIVF…HGWLEPLLAR (110 aa). Residues aspartate 269, histidine 271, and histidine 407 each coordinate Mn(2+). Residues 348–410 form a catalytic subdomain B region; it reads PIKSPTFAGG…PCSVVGHVFR (63 aa). Asparagine 476 is a glycosylation site (N-linked (GlcNAc...) asparagine). Positions 507–622 constitute a Ricin B-type lectin domain; it reads DHCLDVGENN…SDPHQHWLFI (116 aa). An intrachain disulfide couples cysteine 509 to cysteine 527. Residues aspartate 511, glutamate 514, histidine 528, and asparagine 533 each contribute to the UDP-N-acetyl-alpha-D-galactosamine site. Cystine bridges form between cysteine 553–cysteine 566 and cysteine 597–cysteine 610.

Belongs to the glycosyltransferase 2 family. GalNAc-T subfamily. It depends on Mn(2+) as a cofactor.

It is found in the golgi apparatus membrane. The catalysed reaction is L-seryl-[protein] + UDP-N-acetyl-alpha-D-galactosamine = a 3-O-[N-acetyl-alpha-D-galactosaminyl]-L-seryl-[protein] + UDP + H(+). The enzyme catalyses L-threonyl-[protein] + UDP-N-acetyl-alpha-D-galactosamine = a 3-O-[N-acetyl-alpha-D-galactosaminyl]-L-threonyl-[protein] + UDP + H(+). It functions in the pathway protein modification; protein glycosylation. Catalyzes the initial reaction in O-linked oligosaccharide biosynthesis, the transfer of an N-acetyl-D-galactosamine residue to a serine or threonine residue on the protein receptor. May participate in synthesis of oncofetal fibronectin. Has activity toward MUC1A, MUC2, EA2 and fibronectin peptides. This Bos taurus (Bovine) protein is Polypeptide N-acetylgalactosaminyltransferase 6 (GALNT6).